We begin with the raw amino-acid sequence, 852 residues long: Alanine--tRNA ligase (852 aa).

Residues histidine 554, histidine 558, cysteine 656, and histidine 660 each coordinate Zn(2+).

The protein belongs to the class-II aminoacyl-tRNA synthetase family. Requires Zn(2+) as cofactor.

The protein resides in the cytoplasm. It catalyses the reaction tRNA(Ala) + L-alanine + ATP = L-alanyl-tRNA(Ala) + AMP + diphosphate. Its function is as follows. Catalyzes the attachment of alanine to tRNA(Ala) in a two-step reaction: alanine is first activated by ATP to form Ala-AMP and then transferred to the acceptor end of tRNA(Ala). Also edits incorrectly charged Ser-tRNA(Ala) and Gly-tRNA(Ala) via its editing domain. This chain is Alanine--tRNA ligase, found in Campylobacter curvus (strain 525.92).